A 162-amino-acid polypeptide reads, in one-letter code: CASP-like protein 0U1 (162 aa).

Topologically, residues M1–R11 are cytoplasmic. Residues F12–Y32 form a helical membrane-spanning segment. Over L33–Y43 the chain is Extracellular. The chain crosses the membrane as a helical span at residues L44–C64. Residues G65–P69 lie on the Cytoplasmic side of the membrane. A helical membrane pass occupies residues P70 to V90. Residues T91–A123 are Extracellular-facing. An N-linked (GlcNAc...) asparagine glycan is attached at N96. A helical membrane pass occupies residues A124 to F144. At R145 to V162 the chain is on the cytoplasmic side.

Belongs to the Casparian strip membrane proteins (CASP) family. Homodimer and heterodimers.

It localises to the cell membrane. The chain is CASP-like protein 0U1 from Chlorokybus atmophyticus (Soil alga).